Here is a 432-residue protein sequence, read N- to C-terminus: Gamma-glutamyl phosphate reductase (432 aa).

This sequence belongs to the gamma-glutamyl phosphate reductase family.

Its subcellular location is the cytoplasm. It catalyses the reaction L-glutamate 5-semialdehyde + phosphate + NADP(+) = L-glutamyl 5-phosphate + NADPH + H(+). It functions in the pathway amino-acid biosynthesis; L-proline biosynthesis; L-glutamate 5-semialdehyde from L-glutamate: step 2/2. In terms of biological role, catalyzes the NADPH-dependent reduction of L-glutamate 5-phosphate into L-glutamate 5-semialdehyde and phosphate. The product spontaneously undergoes cyclization to form 1-pyrroline-5-carboxylate. The chain is Gamma-glutamyl phosphate reductase from Methylorubrum populi (strain ATCC BAA-705 / NCIMB 13946 / BJ001) (Methylobacterium populi).